The sequence spans 429 residues: Phosphoribosylamine--glycine ligase (429 aa).

Positions 109-316 (KDFLARHQIP…LVELCLAAID (208 aa)) constitute an ATP-grasp domain. 135–196 (VREQGAPIVV…EEFLDGEEAS (62 aa)) serves as a coordination point for ATP. Residues 212 to 234 (SQDHKRVGDKDTGPNTGGMGAYS) are disordered. Residues 213-223 (QDHKRVGDKDT) show a composition bias toward basic and acidic residues. Glu-286 and Asn-288 together coordinate Mg(2+).

Belongs to the GARS family. The cofactor is Mg(2+). Mn(2+) serves as cofactor.

The catalysed reaction is 5-phospho-beta-D-ribosylamine + glycine + ATP = N(1)-(5-phospho-beta-D-ribosyl)glycinamide + ADP + phosphate + H(+). Its pathway is purine metabolism; IMP biosynthesis via de novo pathway; N(1)-(5-phospho-D-ribosyl)glycinamide from 5-phospho-alpha-D-ribose 1-diphosphate: step 2/2. The polypeptide is Phosphoribosylamine--glycine ligase (Vibrio vulnificus (strain CMCP6)).